We begin with the raw amino-acid sequence, 125 residues long: Large ribosomal subunit protein bL12 (125 aa).

The protein belongs to the bacterial ribosomal protein bL12 family. Homodimer. Part of the ribosomal stalk of the 50S ribosomal subunit. Forms a multimeric L10(L12)X complex, where L10 forms an elongated spine to which 2 to 4 L12 dimers bind in a sequential fashion. Binds GTP-bound translation factors.

Functionally, forms part of the ribosomal stalk which helps the ribosome interact with GTP-bound translation factors. Is thus essential for accurate translation. The protein is Large ribosomal subunit protein bL12 of Campylobacter jejuni subsp. jejuni serotype O:2 (strain ATCC 700819 / NCTC 11168).